Consider the following 974-residue polypeptide: MASILDQYEDSQNIRQHSRMSTANIGITHSGFVNVRLEEEKPIFTKQRIDFSPPEKINQFSVCNNQLCMSLGKDTLLRIDLGKPDQPNQIELGRKDDSKVHRLFLDPTGSHLVICLTTNECVYLNRNTQKVRGLSRWRGHLIESIGWNKLIGSETNTGPILVGTSQGIIFEAEISASEGSLFNTNPDQYFRQVHYLEEDGKPAPVCCLEVERGLETKYFIIATTRKRLFQFVGKLAEGSEQQGFSSIFAQNQDLLPSFQEFPVNMGYSEITFYTSKLRSRPKTFAWMMGNGVLYGQLDYVRPDSLLSDVQVWEYTQDIDLNFVKPISIVLTQFHFLLLLPDRVRGICTLNGQVVHEDVFPEKFGTLQKMIKDPITGLVWIYTEKAVFRYHIQKEARDVWQMYMNMNKFDLAKEYCKDRPECLDMVLAKEAEHCFQNKRYLESAKCYALTQNYFEEIALKFIEAKQEEALKEFLIKKLVNLKPSEKTQITLLVTWLTELYLNRLGQLEADEGKQHLFLETREEFRTFLKSPKHKDCFYNNRSTIYDLLASHGDVDNMVYFSVIMQDYERVISHYCQHDDYSAALDVLSKHCDDKLFYKFSPVLMQHIPKKVVDAWIQMGNRLDPKNLIPALVNYSQMGSMQQINETIRYMEFCVYELDVKEEAIHNYLLSLYAKHKPDALLWYLEQAGTHVSDIHYDLKYALRLCSEHGYLQACVLVYKIMELYEEAVDLALKVDVDLAKSCADLPEDDEELRKKLWLKIARHVVQEEKDVKKAMNCLSSCNLLKIEDILPFFPDFVTIDHFKEAICSSLEEYNKHIEELKQEMEEATESAKRIREDIQEMRNKYGVVESQEKCATCDFPLLNRPFYLFLCGHMFHYDCLLQEVIPHLSVYKQNKLDELQKKLAATTQTTKARHKPREEDTVSLGKGQGSREQIKSDIDDIIACECVYCGELMIKSIDKPFIDPQKFDQEMSSWL.

Positions 461 to 481 (IEAKQEEALKEFLIKKLVNLK) form a coiled coil. A CHCR repeat occupies 618–772 (GNRLDPKNLI…VVQEEKDVKK (155 aa)). Positions 799 to 852 (DHFKEAICSSLEEYNKHIEELKQEMEEATESAKRIREDIQEMRNKYGVVESQEK) form a coiled coil. An RING-type zinc finger spans residues 853-948 (CATCDFPLLN…DIIACECVYC (96 aa)). The tract at residues 905-930 (TTQTTKARHKPREEDTVSLGKGQGSR) is disordered.

This sequence belongs to the VPS18 family. In terms of assembly, component of the homotypic fusion and vacuole protein sorting (HOPS) complex.

It is found in the late endosome membrane. Its subcellular location is the lysosome membrane. Its function is as follows. Plays a role in vesicle-mediated protein trafficking to lysosomal compartments including the endocytic membrane transport pathways. Believed to act as a core component of the putative HOPS endosomal tethering complex which is proposed to be involved in the Rab5-to-Rab7 endosome conversion probably implicating MON1A/B, and via binding SNAREs and SNARE complexes to mediate tethering and docking events during SNARE-mediated membrane fusion. May be involved in vesicle trafficking to the hepatocyte apical membrane and play a role in development of the intra-hepatic biliary tree. May target endosomes to the pigment granule in melanocytes. Essential for early embryonic development. The chain is Vacuolar protein sorting-associated protein 18 homolog (vps18) from Danio rerio (Zebrafish).